Here is a 156-residue protein sequence, read N- to C-terminus: Small ribosomal subunit protein uS7 (156 aa).

This sequence belongs to the universal ribosomal protein uS7 family. As to quaternary structure, part of the 30S ribosomal subunit. Contacts proteins S9 and S11.

Its function is as follows. One of the primary rRNA binding proteins, it binds directly to 16S rRNA where it nucleates assembly of the head domain of the 30S subunit. Is located at the subunit interface close to the decoding center, probably blocks exit of the E-site tRNA. In Streptococcus pneumoniae (strain Taiwan19F-14), this protein is Small ribosomal subunit protein uS7.